Consider the following 1238-residue polypeptide: DNA-directed RNA polymerase subunit beta (1238 aa).

The protein belongs to the RNA polymerase beta chain family. In terms of assembly, the RNAP catalytic core consists of 2 alpha, 1 beta, 1 beta' and 1 omega subunit. When a sigma factor is associated with the core the holoenzyme is formed, which can initiate transcription.

The catalysed reaction is RNA(n) + a ribonucleoside 5'-triphosphate = RNA(n+1) + diphosphate. Functionally, DNA-dependent RNA polymerase catalyzes the transcription of DNA into RNA using the four ribonucleoside triphosphates as substrates. This is DNA-directed RNA polymerase subunit beta from Clostridioides difficile (strain 630) (Peptoclostridium difficile).